A 545-amino-acid polypeptide reads, in one-letter code: Chaperonin GroEL (545 aa).

ATP contacts are provided by residues 30 to 33 (TLGP), K51, 87 to 91 (DGTTT), G415, and D496.

It belongs to the chaperonin (HSP60) family. In terms of assembly, forms a cylinder of 14 subunits composed of two heptameric rings stacked back-to-back. Interacts with the co-chaperonin GroES.

The protein resides in the cytoplasm. It carries out the reaction ATP + H2O + a folded polypeptide = ADP + phosphate + an unfolded polypeptide.. Together with its co-chaperonin GroES, plays an essential role in assisting protein folding. The GroEL-GroES system forms a nano-cage that allows encapsulation of the non-native substrate proteins and provides a physical environment optimized to promote and accelerate protein folding. The chain is Chaperonin GroEL from Haemophilus influenzae (strain 86-028NP).